Reading from the N-terminus, the 269-residue chain is Expansin-A32 (269 aa).

A signal peptide spans 1-25; the sequence is MWCTWALGRVVLAVVFLVALAAGDA. Positions 60-174 constitute an Expansin-like EG45 domain; it reads DGACGYKDTS…RRVPCVKVGG (115 aa). The 81-residue stretch at 184-264 folds into the Expansin-like CBD domain; sequence YFNLVMVSNV…DWQFGVTYQA (81 aa).

The protein belongs to the expansin family. Expansin A subfamily.

It is found in the secreted. Its subcellular location is the cell wall. The protein resides in the membrane. Its function is as follows. May cause loosening and extension of plant cell walls by disrupting non-covalent bonding between cellulose microfibrils and matrix glucans. No enzymatic activity has been found. May be required for rapid internodal elongation in deepwater rice during submergence. The chain is Expansin-A32 (EXPA32) from Oryza sativa subsp. japonica (Rice).